A 119-amino-acid polypeptide reads, in one-letter code: Dihydroneopterin aldolase (119 aa).

Residues glutamate 21, tyrosine 53, and 72-73 (IE) contribute to the substrate site. Lysine 99 serves as the catalytic Proton donor/acceptor.

The protein belongs to the DHNA family.

It carries out the reaction 7,8-dihydroneopterin = 6-hydroxymethyl-7,8-dihydropterin + glycolaldehyde. The protein operates within cofactor biosynthesis; tetrahydrofolate biosynthesis; 2-amino-4-hydroxy-6-hydroxymethyl-7,8-dihydropteridine diphosphate from 7,8-dihydroneopterin triphosphate: step 3/4. In terms of biological role, catalyzes the conversion of 7,8-dihydroneopterin to 6-hydroxymethyl-7,8-dihydropterin. This is Dihydroneopterin aldolase (folB) from Streptococcus pyogenes serotype M1.